The primary structure comprises 247 residues: Golgi-associated RAB2 interactor protein 5A (247 aa).

A compositionally biased stretch (pro residues) spans 1 to 16 (MGPPLWPDLQEPPPPG). Disordered regions lie at residues 1 to 22 (MGPPLWPDLQEPPPPGTSSQIR) and 60 to 92 (GDIAMRRDRGPKPALGGAGEVEPGGMAASPTGR).

Belongs to the GARIN family. As to quaternary structure, interacts (via N-terminus) with RAB2B (in GTP-bound form).

It localises to the golgi apparatus. RAB2B effector protein which promotes cytosolic DNA-induced innate immune responses. Regulates IFN responses against DNA viruses by regulating the CGAS-STING signaling axis. The chain is Golgi-associated RAB2 interactor protein 5A from Homo sapiens (Human).